The primary structure comprises 548 residues: T-complex protein 1 subunit alpha (548 aa).

The protein belongs to the TCP-1 chaperonin family. As to quaternary structure, heterooligomeric complex of about 850 to 900 kDa that forms two stacked rings, 12 to 16 nm in diameter.

Its subcellular location is the cytoplasm. Its function is as follows. Molecular chaperone; assists the folding of proteins upon ATP hydrolysis. Known to play a role, in vitro, in the folding of actin and tubulin. The chain is T-complex protein 1 subunit alpha (tcp1) from Dictyostelium discoideum (Social amoeba).